Consider the following 283-residue polypeptide: Shikimate kinase (283 aa).

ATP is bound at residue 86–96; it reads PLKSGLSSSSA.

The protein belongs to the GHMP kinase family. Archaeal shikimate kinase subfamily.

It is found in the cytoplasm. It carries out the reaction shikimate + ATP = 3-phosphoshikimate + ADP + H(+). It functions in the pathway metabolic intermediate biosynthesis; chorismate biosynthesis; chorismate from D-erythrose 4-phosphate and phosphoenolpyruvate: step 5/7. This chain is Shikimate kinase, found in Methanococcus vannielii (strain ATCC 35089 / DSM 1224 / JCM 13029 / OCM 148 / SB).